The following is a 350-amino-acid chain: MKKIPCVMMRGGTSRGAFLLAEHLPEDQTQRDKILMAIMGSGNDLEIDGIGGGNPLTSKVAIISRSSDPRADVDYLFAQVIVHEQRVDTTPNCGNMLSGVGAFAIENGLIAATSPVTRVRIRNVNTGTFIEADVQTPNGVVEYEGSARIDGVPGTAAPVALTFLNAAGTKTGKVFPTDNQIDYFDDVPVTCIDMAMPVVIIPAEYLGKTGYELPAELDADKALLARIESIRLQAGKAMGLGDVSNMVIPKPVLISPAQKGGAINVRYFMPHSCHRALAITGAIAISSSCALEGTVTRQIVPSVGYGNINIEHPSGALDVHLSNEGQDATTLRASVIRTTRKIFSGEVYLP.

It belongs to the PrpF family.

This is Putative isomerase YbhH (ybhH) from Escherichia coli O6:H1 (strain CFT073 / ATCC 700928 / UPEC).